A 637-amino-acid polypeptide reads, in one-letter code: Biosynthetic arginine decarboxylase (637 aa).

Lys101 bears the N6-(pyridoxal phosphate)lysine mark. 286–296 is a binding site for substrate; sequence FDVGGGLAVDY.

It belongs to the Orn/Lys/Arg decarboxylase class-II family. SpeA subfamily. The cofactor is Mg(2+). Pyridoxal 5'-phosphate is required as a cofactor.

The enzyme catalyses L-arginine + H(+) = agmatine + CO2. It functions in the pathway amine and polyamine biosynthesis; agmatine biosynthesis; agmatine from L-arginine: step 1/1. Functionally, catalyzes the biosynthesis of agmatine from arginine. The protein is Biosynthetic arginine decarboxylase of Shewanella woodyi (strain ATCC 51908 / MS32).